Here is a 569-residue protein sequence, read N- to C-terminus: Urease subunit alpha (569 aa).

The Urease domain maps to 131–569; that stretch reads GGFDSHIHFI…LPMAQRYFLF (439 aa). Residues His136, His138, and Lys219 each contribute to the Ni(2+) site. An N6-carboxylysine modification is found at Lys219. Residue His221 coordinates substrate. Ni(2+)-binding residues include His248 and His274. The active-site Proton donor is His322. Asp362 lines the Ni(2+) pocket.

It belongs to the metallo-dependent hydrolases superfamily. Urease alpha subunit family. Heterotrimer of UreA (gamma), UreB (beta) and UreC (alpha) subunits. Three heterotrimers associate to form the active enzyme. Ni cation is required as a cofactor. Carboxylation allows a single lysine to coordinate two nickel ions.

It is found in the cytoplasm. The catalysed reaction is urea + 2 H2O + H(+) = hydrogencarbonate + 2 NH4(+). It participates in nitrogen metabolism; urea degradation; CO(2) and NH(3) from urea (urease route): step 1/1. The sequence is that of Urease subunit alpha from Roseobacter denitrificans (strain ATCC 33942 / OCh 114) (Erythrobacter sp. (strain OCh 114)).